Reading from the N-terminus, the 122-residue chain is Large ribosomal subunit protein uL14 (122 aa).

It belongs to the universal ribosomal protein uL14 family. In terms of assembly, part of the 50S ribosomal subunit. Forms a cluster with proteins L3 and L19. In the 70S ribosome, L14 and L19 interact and together make contacts with the 16S rRNA in bridges B5 and B8.

Functionally, binds to 23S rRNA. Forms part of two intersubunit bridges in the 70S ribosome. The protein is Large ribosomal subunit protein uL14 of Bifidobacterium animalis subsp. lactis (strain AD011).